The chain runs to 336 residues: Fructose-1,6-bisphosphatase class 1 (336 aa).

The Mg(2+) site is built by Glu-90, Asp-112, Leu-114, and Asp-115. Substrate-binding positions include 115–118 (DGSS), Asn-211, and Lys-277. A Mg(2+)-binding site is contributed by Glu-283.

It belongs to the FBPase class 1 family. As to quaternary structure, homotetramer. Requires Mg(2+) as cofactor.

Its subcellular location is the cytoplasm. The catalysed reaction is beta-D-fructose 1,6-bisphosphate + H2O = beta-D-fructose 6-phosphate + phosphate. Its pathway is carbohydrate biosynthesis; gluconeogenesis. The sequence is that of Fructose-1,6-bisphosphatase class 1 from Pseudomonas fluorescens (strain SBW25).